The primary structure comprises 363 residues: Pyrimidine monooxygenase RutA (363 aa).

FMN-binding positions include 49-50 (IK), Asn115, Glu124, 140-141 (RY), and Ser190.

It belongs to the NtaA/SnaA/DszA monooxygenase family. RutA subfamily.

The enzyme catalyses uracil + FMNH2 + NADH + O2 = (Z)-3-ureidoacrylate + FMN + NAD(+) + H2O + H(+). It carries out the reaction thymine + FMNH2 + NADH + O2 = (Z)-2-methylureidoacrylate + FMN + NAD(+) + H2O + H(+). In terms of biological role, catalyzes the pyrimidine ring opening between N-3 and C-4 by an unusual flavin hydroperoxide-catalyzed mechanism, adding oxygen atoms in the process to yield ureidoacrylate peracid, that immediately reacts with FMN forming ureidoacrylate and FMN-N(5)-oxide. The FMN-N(5)-oxide reacts spontaneously with NADH to produce FMN. Requires the flavin reductase RutF to regenerate FMN in vivo. In Pantoea ananatis (strain LMG 20103), this protein is Pyrimidine monooxygenase RutA.